A 224-amino-acid chain; its full sequence is Flagellar L-ring protein (224 aa).

An N-terminal signal peptide occupies residues 1–15 (MARYLLLASTLLLAA). C16 carries the N-palmitoyl cysteine lipid modification. The S-diacylglycerol cysteine moiety is linked to residue C16.

Belongs to the FlgH family. As to quaternary structure, the basal body constitutes a major portion of the flagellar organelle and consists of four rings (L,P,S, and M) mounted on a central rod.

The protein localises to the cell outer membrane. The protein resides in the bacterial flagellum basal body. Its function is as follows. Assembles around the rod to form the L-ring and probably protects the motor/basal body from shearing forces during rotation. The chain is Flagellar L-ring protein from Shewanella sp. (strain ANA-3).